The sequence spans 558 residues: Ribonuclease Y (558 aa).

The helical transmembrane segment at 3 to 23 (VLSILLILVAVGVGIFVGRQF) threads the bilayer. A KH domain is found at 248–311 (TTTTVELPSN…EIAKEALQRL (64 aa)). The HD domain occupies 374–467 (VLLHSKEVAY…VCAADALSAA (94 aa)).

The protein belongs to the RNase Y family.

It is found in the cell membrane. Its function is as follows. Endoribonuclease that initiates mRNA decay. This is Ribonuclease Y from Aquifex aeolicus (strain VF5).